The chain runs to 370 residues: TD and POZ domain-containing protein 4 (370 aa).

The MATH domain maps to 19–149; sequence KLCYRWTISN…DDKFTLLCKV (131 aa). Residues 188 to 251 enclose the BTB domain; that stretch reads TDCSLLVAGH…MMGFIYTGKV (64 aa).

Belongs to the Tdpoz family.

This chain is TD and POZ domain-containing protein 4, found in Mus musculus (Mouse).